Consider the following 260-residue polypeptide: Proteasome subunit alpha type-1 (260 aa).

A disordered region spans residues 240–260 (PRTTGGAAAAAAPGGAEPMQM). Over residues 244 to 260 (GGAAAAAAPGGAEPMQM) the composition is skewed to low complexity.

The protein belongs to the peptidase T1A family. As to quaternary structure, the 26S proteasome consists of a 20S proteasome core and two 19S regulatory subunits. The 20S proteasome core is composed of 28 subunits that are arranged in four stacked rings, resulting in a barrel-shaped structure. The two end rings are each formed by seven alpha subunits, and the two central rings are each formed by seven beta subunits. The catalytic chamber with the active sites is on the inside of the barrel.

The protein localises to the cytoplasm. The protein resides in the nucleus. The proteasome is a multicatalytic proteinase complex which is characterized by its ability to cleave peptides with Arg, Phe, Tyr, Leu, and Glu adjacent to the leaving group at neutral or slightly basic pH. The proteasome has an ATP-dependent proteolytic activity. The protein is Proteasome subunit alpha type-1 (pas-6) of Caenorhabditis elegans.